Reading from the N-terminus, the 335-residue chain is Phosphate acyltransferase (335 aa).

It belongs to the PlsX family. In terms of assembly, homodimer. Probably interacts with PlsY.

Its subcellular location is the cytoplasm. It catalyses the reaction a fatty acyl-[ACP] + phosphate = an acyl phosphate + holo-[ACP]. Its pathway is lipid metabolism; phospholipid metabolism. Functionally, catalyzes the reversible formation of acyl-phosphate (acyl-PO(4)) from acyl-[acyl-carrier-protein] (acyl-ACP). This enzyme utilizes acyl-ACP as fatty acyl donor, but not acyl-CoA. The protein is Phosphate acyltransferase of Clostridium botulinum (strain Langeland / NCTC 10281 / Type F).